Here is a 269-residue protein sequence, read N- to C-terminus: Undecaprenyl-diphosphatase (269 aa).

The next 8 helical transmembrane spans lie at 1-21, 40-59, 87-107, 117-137, 147-166, 188-208, 220-240, and 248-268; these read MDIMHAAVLGILQGLTEILPI, GLTFDVGLHVGTLIALCVYF, FFIIAGTVPAAIAGKTLEKPI, LIALLLIAFGLLLALADTTGP, LRGALLIGLAQCLALIPGVS, FSFLLSLPIVAGAGILKMGEL, PLLAGMATSAVSGYLGVALLL, and LYPFVWYRLLAGGAVLAYLFA.

It belongs to the UppP family.

It is found in the cell inner membrane. It carries out the reaction di-trans,octa-cis-undecaprenyl diphosphate + H2O = di-trans,octa-cis-undecaprenyl phosphate + phosphate + H(+). Functionally, catalyzes the dephosphorylation of undecaprenyl diphosphate (UPP). Confers resistance to bacitracin. The protein is Undecaprenyl-diphosphatase of Geobacter sulfurreducens (strain ATCC 51573 / DSM 12127 / PCA).